The sequence spans 1393 residues: ABC transporter G family member 3 (1393 aa).

Basic and acidic residues predominate over residues 1-14 (MEDKNNIELQEKAP). Positions 1 to 68 (MEDKNNIELQ…IIYQNPTPAS (68 aa)) are disordered. Over residues 15–50 (DNYNNNNNNNNNNNNNNNNNNNNNNNNNNNNNNDIN) the composition is skewed to low complexity. The ABC transporter 1 domain occupies 100-353 (VSANNISYYI…YFSSIGLAPL (254 aa)). An ATP-binding site is contributed by 144–151 (GIPGAGKS). Positions 473–698 (MQYAVRFFQA…SYADGGYQGN (226 aa)) constitute an ABC transmembrane type-2 1 domain. The next 7 helical transmembrane spans lie at 479–499 (FFQA…MGFT), 509–529 (LVYF…EEFF), 558–578 (IPIS…IAGF), 585–605 (FIVF…IFQV), 615–635 (LASL…GYMI), 640–660 (IPGW…IDMV), and 724–744 (VDIV…FLGV). Residues 783–1035 (MTFQNLNYVV…VIQHFTSAGY (253 aa)) enclose the ABC transporter 2 domain. 828–835 (GPSGAGKS) contacts ATP. An ABC transmembrane type-2 2 domain is found at 1121-1388 (QTILLRFLRS…FLGYLALRFI (268 aa)). The next 6 helical transmembrane spans lie at 1122–1142 (TILL…TLFL), 1157–1177 (LVFL…PTIV), 1206–1226 (LPMM…LTGL), 1235–1255 (FFFS…LATL), 1265–1285 (IAIL…GFFI), and 1364–1384 (FYNL…GYLA).

This sequence belongs to the ABC transporter superfamily. ABCG family. PDR (TC 3.A.1.205) subfamily.

Its subcellular location is the membrane. This Dictyostelium discoideum (Social amoeba) protein is ABC transporter G family member 3 (abcG3).